Here is a 1615-residue protein sequence, read N- to C-terminus: DNA-directed RNA polymerase I subunit rpa1 (1615 aa).

Residues cysteine 65, cysteine 68, cysteine 75, and histidine 78 each coordinate Zn(2+). The segment at 155-181 (GKSNEEGEEVMESDESDSDKMDTDENK) is disordered. The segment covering 160-171 (EGEEVMESDESD) has biased composition (acidic residues). Positions 172 to 181 (SDKMDTDENK) are enriched in basic and acidic residues. Mg(2+) contacts are provided by aspartate 593, aspartate 595, and aspartate 597. The tract at residues 955–967 (PQDYFFHCMAGRE) is bridging helix. Residues 1305 to 1316 (DSLTINDDDAPA) are compositionally biased toward acidic residues. The tract at residues 1305–1411 (DSLTINDDDA…NSRSSNSFSD (107 aa)) is disordered. Positions 1317-1336 (NDDTTNNDENTSQQQPSSQN) are enriched in low complexity. Residues 1366–1399 (EDGEEEAEEKDSDEGESEAEESDDKSDVDSDSDE) show a composition bias toward acidic residues. The span at 1400–1411 (ISNSRSSNSFSD) shows a compositional bias: low complexity.

It belongs to the RNA polymerase beta' chain family. Component of the RNA polymerase I (Pol I) complex consisting of at least 13 subunits.

It localises to the nucleus. The catalysed reaction is RNA(n) + a ribonucleoside 5'-triphosphate = RNA(n+1) + diphosphate. Its function is as follows. DNA-dependent RNA polymerase catalyzes the transcription of DNA into RNA using the four ribonucleoside triphosphates as substrates. Largest and catalytic core component of RNA polymerase I which synthesizes ribosomal RNA precursors. Forms the polymerase active center together with the second largest subunit. A single stranded DNA template strand of the promoter is positioned within the central active site cleft of Pol I. A bridging helix emanates from RPA1 and crosses the cleft near the catalytic site and is thought to promote translocation of Pol I by acting as a ratchet that moves the RNA-DNA hybrid through the active site by switching from straight to bent conformations at each step of nucleotide addition. The polypeptide is DNA-directed RNA polymerase I subunit rpa1 (polr1a) (Dictyostelium discoideum (Social amoeba)).